The following is a 244-amino-acid chain: DNA repair protein RecO (244 aa).

This sequence belongs to the RecO family.

In terms of biological role, involved in DNA repair and RecF pathway recombination. The sequence is that of DNA repair protein RecO from Caldicellulosiruptor saccharolyticus (strain ATCC 43494 / DSM 8903 / Tp8T 6331).